Here is a 148-residue protein sequence, read N- to C-terminus: Large ribosomal subunit protein uL15 (148 aa).

The segment covering 1–40 (MADILQMHDLKPAPGANKDRIRVGRGEGSKGKTSGRGDKG) has biased composition (basic and acidic residues). The interval 1–47 (MADILQMHDLKPAPGANKDRIRVGRGEGSKGKTSGRGDKGTKKRYQV) is disordered.

Belongs to the universal ribosomal protein uL15 family. Part of the 50S ribosomal subunit.

Functionally, binds to the 23S rRNA. The protein is Large ribosomal subunit protein uL15 of Bifidobacterium adolescentis (strain ATCC 15703 / DSM 20083 / NCTC 11814 / E194a).